Reading from the N-terminus, the 213-residue chain is Imidazole glycerol phosphate synthase subunit HisH (213 aa).

One can recognise a Glutamine amidotransferase type-1 domain in the interval 4–211 (NIGLIDYGMG…LAWLKKETKD (208 aa)). Cys82 functions as the Nucleophile in the catalytic mechanism. Active-site residues include His186 and Glu188.

Heterodimer of HisH and HisF.

It is found in the cytoplasm. The enzyme catalyses 5-[(5-phospho-1-deoxy-D-ribulos-1-ylimino)methylamino]-1-(5-phospho-beta-D-ribosyl)imidazole-4-carboxamide + L-glutamine = D-erythro-1-(imidazol-4-yl)glycerol 3-phosphate + 5-amino-1-(5-phospho-beta-D-ribosyl)imidazole-4-carboxamide + L-glutamate + H(+). It carries out the reaction L-glutamine + H2O = L-glutamate + NH4(+). The protein operates within amino-acid biosynthesis; L-histidine biosynthesis; L-histidine from 5-phospho-alpha-D-ribose 1-diphosphate: step 5/9. In terms of biological role, IGPS catalyzes the conversion of PRFAR and glutamine to IGP, AICAR and glutamate. The HisH subunit catalyzes the hydrolysis of glutamine to glutamate and ammonia as part of the synthesis of IGP and AICAR. The resulting ammonia molecule is channeled to the active site of HisF. The polypeptide is Imidazole glycerol phosphate synthase subunit HisH (Prochlorococcus marinus (strain SARG / CCMP1375 / SS120)).